The primary structure comprises 598 residues: Aspartate--tRNA ligase (598 aa).

Glu-175 is an L-aspartate binding site. Residues Gln-199–Lys-202 are aspartate. Arg-221 provides a ligand contact to L-aspartate. Residues Arg-221–Glu-223 and Gln-230 each bind ATP. His-450 contributes to the L-aspartate binding site. Position 486 (Glu-486) interacts with ATP. L-aspartate is bound at residue Arg-493. Residue Gly-538–Arg-541 participates in ATP binding.

This sequence belongs to the class-II aminoacyl-tRNA synthetase family. Type 1 subfamily. In terms of assembly, homodimer.

It localises to the cytoplasm. The enzyme catalyses tRNA(Asp) + L-aspartate + ATP = L-aspartyl-tRNA(Asp) + AMP + diphosphate. In terms of biological role, catalyzes the attachment of L-aspartate to tRNA(Asp) in a two-step reaction: L-aspartate is first activated by ATP to form Asp-AMP and then transferred to the acceptor end of tRNA(Asp). This chain is Aspartate--tRNA ligase, found in Lactiplantibacillus plantarum (strain ATCC BAA-793 / NCIMB 8826 / WCFS1) (Lactobacillus plantarum).